Consider the following 705-residue polypeptide: 1,4-alpha-glucan branching enzyme GlgB (705 aa).

Catalysis depends on D393, which acts as the Nucleophile. The active-site Proton donor is E446.

Belongs to the glycosyl hydrolase 13 family. GlgB subfamily. Monomer.

It carries out the reaction Transfers a segment of a (1-&gt;4)-alpha-D-glucan chain to a primary hydroxy group in a similar glucan chain.. The protein operates within glycan biosynthesis; glycogen biosynthesis. Catalyzes the formation of the alpha-1,6-glucosidic linkages in glycogen by scission of a 1,4-alpha-linked oligosaccharide from growing alpha-1,4-glucan chains and the subsequent attachment of the oligosaccharide to the alpha-1,6 position. This chain is 1,4-alpha-glucan branching enzyme GlgB, found in Picrophilus torridus (strain ATCC 700027 / DSM 9790 / JCM 10055 / NBRC 100828 / KAW 2/3).